A 452-amino-acid polypeptide reads, in one-letter code: Phosphoglucosamine mutase (452 aa).

Ser103 (phosphoserine intermediate) is an active-site residue. The Mg(2+) site is built by Ser103, Asp243, Asp245, and Asp247. Position 103 is a phosphoserine (Ser103).

The protein belongs to the phosphohexose mutase family. Mg(2+) is required as a cofactor. Post-translationally, activated by phosphorylation.

It catalyses the reaction alpha-D-glucosamine 1-phosphate = D-glucosamine 6-phosphate. In terms of biological role, catalyzes the conversion of glucosamine-6-phosphate to glucosamine-1-phosphate. This Exiguobacterium sp. (strain ATCC BAA-1283 / AT1b) protein is Phosphoglucosamine mutase.